Here is a 554-residue protein sequence, read N- to C-terminus: Gamma-aminobutyric acid receptor subunit alpha-4 (554 aa).

The N-terminal stretch at 1-35 (MVSAKKVPAIALSAGVSFALLRFLCLAVCLNESPG) is a signal peptide. At 36–259 (QNQKEEKLCT…FHLRRKMGYF (224 aa)) the chain is on the extracellular side. Asn-47 carries an N-linked (GlcNAc...) asparagine glycan. Arg-100 is a binding site for 4-aminobutanoate. N-linked (GlcNAc...) asparagine glycosylation is found at Asn-144 and Asn-157. Thr-163 contributes to the 4-aminobutanoate binding site. Cysteines 172 and 186 form a disulfide. A helical transmembrane segment spans residues 260 to 280 (MIQTYIPCIMTVILSQVSFWI). The Cytoplasmic portion of the chain corresponds to 281–284 (NKES). Residues 285-305 (VPARTVFGITTVLTMTTLSIS) traverse the membrane as a helical segment. Topologically, residues 306-318 (ARHSLPKVSYATA) are extracellular. The chain crosses the membrane as a helical span at residues 319–341 (MDWFIAVCFAFVFSALIEFAAVN). Over 342 to 517 (YFTNIQMEKA…PPPSGSGTSK (176 aa)) the chain is Cytoplasmic. 4 disordered regions span residues 350–381 (KAKR…QNTN), 397–435 (ESDV…SPNP), 452–471 (PSAS…ASVG), and 495–515 (ATGK…GSGT). Positions 410–422 (SSKSSTVVQESSK) are enriched in low complexity. The span at 502-511 (TPPPSAPPPS) shows a compositional bias: pro residues. A helical transmembrane segment spans residues 518–540 (IDKYARILFPVTFGAFNMVYWVV). Residues 541–554 (YLSKDTMEKSESLM) are Extracellular-facing.

The protein belongs to the ligand-gated ion channel (TC 1.A.9) family. Gamma-aminobutyric acid receptor (TC 1.A.9.5) subfamily. GABRA4 sub-subfamily. As to quaternary structure, heteropentamer, formed by a combination of alpha (GABRA1-6), beta (GABRB1-3), gamma (GABRG1-3), delta (GABRD), epsilon (GABRE), rho (GABRR1-3), pi (GABRP) and theta (GABRQ) chains, each subunit exhibiting distinct physiological and pharmacological properties. In terms of tissue distribution, expressed in the brain.

It localises to the cell membrane. The protein resides in the postsynaptic cell membrane. It carries out the reaction chloride(in) = chloride(out). Potentiated by histamine. Its function is as follows. Alpha subunit of the heteropentameric ligand-gated chloride channel gated by gamma-aminobutyric acid (GABA), a major inhibitory neurotransmitter in the brain. GABA-gated chloride channels, also named GABA(A) receptors (GABAAR), consist of five subunits arranged around a central pore and contain GABA active binding site(s) located at the alpha and beta subunit interface(s). When activated by GABA, GABAARs selectively allow the flow of chloride anions across the cell membrane down their electrochemical gradient. GABAARs containing alpha-4 are predominantly extrasynaptic, contributing to tonic inhibition in dentate granule cells and thalamic relay neurons. Extrasynaptic alpha-4-containing GABAARs control levels of excitability and network activity. GABAAR containing alpha-4-beta-3-delta subunits can simultaneously bind GABA and histamine where histamine binds at the interface of two neighboring beta subunits, which may be involved in the regulation of sleep and wakefulness. The sequence is that of Gamma-aminobutyric acid receptor subunit alpha-4 from Homo sapiens (Human).